A 522-amino-acid chain; its full sequence is Vicilin-like seed storage protein At4g36700 (522 aa).

Residues 1-25 (MTRFAVLPLSVLLLVLLFLCTESLA) form the signal peptide. 5 N-linked (GlcNAc...) asparagine glycosylation sites follow: Asn-206, Asn-303, Asn-341, Asn-374, and Asn-414. One can recognise a Cupin type-1 domain in the interval 265–421 (FNVFESEPDF…SLNVSSVTID (157 aa)). Positions 457–522 (DERKRRHDER…EWEMEGEEES (66 aa)) are disordered. 2 stretches are compositionally biased toward basic and acidic residues: residues 466-491 (RKKE…EKKR) and 501-515 (EELR…KEWE).

This sequence belongs to the 7S seed storage protein family.

Its function is as follows. Seed storage protein. This is Vicilin-like seed storage protein At4g36700 from Arabidopsis thaliana (Mouse-ear cress).